Reading from the N-terminus, the 538-residue chain is Putative outer membrane porin BglH (538 aa).

The first 25 residues, 1-25, serve as a signal peptide directing secretion; the sequence is MFRQNLITSAILLMAPLAFSAQSLA. The segment at 52 to 82 is disordered; the sequence is KDEEKKKYTPATVNRSVSTNDQGYAANPFPT. Polar residues predominate over residues 62–73; sequence ATVNRSVSTNDQ.

This sequence belongs to the porin LamB (TC 1.B.3) family.

It localises to the cell outer membrane. May be a sugar porin with a broad carbohydrate specificity. The sequence is that of Putative outer membrane porin BglH (bglH) from Shigella flexneri.